Consider the following 147-residue polypeptide: Large ribosomal subunit protein uL15 (147 aa).

The segment at 1 to 65 (MQLHELKPAP…PLQRRLPKRG (65 aa)) is disordered. Composition is skewed to gly residues over residues 21–31 (QGIGSGLGKTA) and 42–52 (SGGGVRPGFEG).

It belongs to the universal ribosomal protein uL15 family. In terms of assembly, part of the 50S ribosomal subunit.

Its function is as follows. Binds to the 23S rRNA. The protein is Large ribosomal subunit protein uL15 of Heliobacterium modesticaldum (strain ATCC 51547 / Ice1).